A 283-amino-acid chain; its full sequence is Flagellar filament 35 kDa core protein (283 aa).

It belongs to the bacterial flagellin family. The flagellum consists of two outer layers around a core that contains several antigenically related polypeptides.

The protein resides in the periplasmic flagellum. It localises to the periplasm. Component of the core of the flagella. The polypeptide is Flagellar filament 35 kDa core protein (flaB) (Leptospira interrogans serogroup Icterohaemorrhagiae serovar copenhageni (strain Fiocruz L1-130)).